The primary structure comprises 63 residues: Large ribosomal subunit protein uL29 (63 aa).

Belongs to the universal ribosomal protein uL29 family.

The chain is Large ribosomal subunit protein uL29 from Vibrio parahaemolyticus serotype O3:K6 (strain RIMD 2210633).